Reading from the N-terminus, the 392-residue chain is Succinate--CoA ligase [ADP-forming] subunit beta (392 aa).

Residues 9-236 (RDLFERHGLP…QAAVDPLEQA (228 aa)) enclose the ATP-grasp domain. ATP is bound by residues lysine 45, 52 to 54 (GRG), alanine 94, and glutamate 99. Residues asparagine 191 and aspartate 205 each coordinate Mg(2+). Residues asparagine 256 and 318-320 (GIT) contribute to the substrate site.

It belongs to the succinate/malate CoA ligase beta subunit family. In terms of assembly, heterotetramer of two alpha and two beta subunits. Mg(2+) is required as a cofactor.

The enzyme catalyses succinate + ATP + CoA = succinyl-CoA + ADP + phosphate. It carries out the reaction GTP + succinate + CoA = succinyl-CoA + GDP + phosphate. It functions in the pathway carbohydrate metabolism; tricarboxylic acid cycle; succinate from succinyl-CoA (ligase route): step 1/1. In terms of biological role, succinyl-CoA synthetase functions in the citric acid cycle (TCA), coupling the hydrolysis of succinyl-CoA to the synthesis of either ATP or GTP and thus represents the only step of substrate-level phosphorylation in the TCA. The beta subunit provides nucleotide specificity of the enzyme and binds the substrate succinate, while the binding sites for coenzyme A and phosphate are found in the alpha subunit. The chain is Succinate--CoA ligase [ADP-forming] subunit beta from Salinispora arenicola (strain CNS-205).